We begin with the raw amino-acid sequence, 173 residues long: C-phycocyanin beta subunit (173 aa).

N73 is subject to N4-methylasparagine. Positions 83 and 154 each coordinate (2R,3E)-phycocyanobilin.

This sequence belongs to the phycobiliprotein family. Heterodimer of an alpha and a beta subunit, which further assembles into trimers and the trimers into hexamers. Contains two covalently linked bilin chromophores.

Its subcellular location is the cellular thylakoid membrane. Functionally, light-harvesting photosynthetic bile pigment-protein from the phycobiliprotein complex (phycobilisome, PBS). Phycocyanin is the major phycobiliprotein in the PBS rod. This is C-phycocyanin beta subunit (cpcB1) from Synechococcus elongatus (strain ATCC 33912 / PCC 7942 / FACHB-805) (Anacystis nidulans R2).